The chain runs to 420 residues: Serine hydroxymethyltransferase (420 aa).

Residues L123 and 127–129 (GHL) contribute to the (6S)-5,6,7,8-tetrahydrofolate site. An N6-(pyridoxal phosphate)lysine modification is found at K232. 357-359 (SPF) is a binding site for (6S)-5,6,7,8-tetrahydrofolate.

The protein belongs to the SHMT family. As to quaternary structure, homodimer. Requires pyridoxal 5'-phosphate as cofactor.

The protein localises to the cytoplasm. It catalyses the reaction (6R)-5,10-methylene-5,6,7,8-tetrahydrofolate + glycine + H2O = (6S)-5,6,7,8-tetrahydrofolate + L-serine. It functions in the pathway one-carbon metabolism; tetrahydrofolate interconversion. It participates in amino-acid biosynthesis; glycine biosynthesis; glycine from L-serine: step 1/1. Catalyzes the reversible interconversion of serine and glycine with tetrahydrofolate (THF) serving as the one-carbon carrier. This reaction serves as the major source of one-carbon groups required for the biosynthesis of purines, thymidylate, methionine, and other important biomolecules. Also exhibits THF-independent aldolase activity toward beta-hydroxyamino acids, producing glycine and aldehydes, via a retro-aldol mechanism. The chain is Serine hydroxymethyltransferase from Streptococcus pyogenes serotype M12 (strain MGAS2096).